The sequence spans 241 residues: Probable transcriptional regulatory protein AZOSEA20720 (241 aa).

Positions 1–21 (MAGHSKWANIQHRKGRQDAKR) are disordered.

Belongs to the TACO1 family.

It localises to the cytoplasm. The sequence is that of Probable transcriptional regulatory protein AZOSEA20720 from Aromatoleum aromaticum (strain DSM 19018 / LMG 30748 / EbN1) (Azoarcus sp. (strain EbN1)).